The following is a 165-amino-acid chain: NADH-quinone oxidoreductase subunit I (165 aa).

2 4Fe-4S ferredoxin-type domains span residues Arg57–Asp86 and Ser96–Ile125. [4Fe-4S] cluster is bound by residues Cys66, Cys69, Cys72, Cys76, Cys105, Cys108, Cys111, and Cys115.

The protein belongs to the complex I 23 kDa subunit family. In terms of assembly, NDH-1 is composed of 14 different subunits. Subunits NuoA, H, J, K, L, M, N constitute the membrane sector of the complex. [4Fe-4S] cluster serves as cofactor.

It is found in the cell inner membrane. The enzyme catalyses a quinone + NADH + 5 H(+)(in) = a quinol + NAD(+) + 4 H(+)(out). NDH-1 shuttles electrons from NADH, via FMN and iron-sulfur (Fe-S) centers, to quinones in the respiratory chain. The immediate electron acceptor for the enzyme in this species is believed to be ubiquinone. Couples the redox reaction to proton translocation (for every two electrons transferred, four hydrogen ions are translocated across the cytoplasmic membrane), and thus conserves the redox energy in a proton gradient. This Polaromonas naphthalenivorans (strain CJ2) protein is NADH-quinone oxidoreductase subunit I.